We begin with the raw amino-acid sequence, 468 residues long: mRNA cleavage and polyadenylation factor CLP1 (468 aa).

Residues 1-22 (MLSLPGLNLAPQPAEPLNAPTS) form a disordered region. ATP-binding positions include glutamate 35, lysine 74, and 138 to 143 (HSGKTS).

Belongs to the Clp1 family. Clp1 subfamily. As to quaternary structure, component of a pre-mRNA cleavage factor complex. Interacts directly with PCF11.

It is found in the nucleus. Its function is as follows. Required for endonucleolytic cleavage during polyadenylation-dependent pre-mRNA 3'-end formation. The polypeptide is mRNA cleavage and polyadenylation factor CLP1 (Phaeosphaeria nodorum (strain SN15 / ATCC MYA-4574 / FGSC 10173) (Glume blotch fungus)).